A 105-amino-acid polypeptide reads, in one-letter code: Large ribosomal subunit protein uL24 (105 aa).

This sequence belongs to the universal ribosomal protein uL24 family. Part of the 50S ribosomal subunit.

Its function is as follows. One of two assembly initiator proteins, it binds directly to the 5'-end of the 23S rRNA, where it nucleates assembly of the 50S subunit. In terms of biological role, one of the proteins that surrounds the polypeptide exit tunnel on the outside of the subunit. This chain is Large ribosomal subunit protein uL24, found in Lachnoclostridium phytofermentans (strain ATCC 700394 / DSM 18823 / ISDg) (Clostridium phytofermentans).